We begin with the raw amino-acid sequence, 162 residues long: Peptidyl-prolyl cis-trans isomerase-like 1 (162 aa).

The PPIase cyclophilin-type domain maps to Met1–Val155.

Belongs to the cyclophilin-type PPIase family. PPIL1 subfamily.

The enzyme catalyses [protein]-peptidylproline (omega=180) = [protein]-peptidylproline (omega=0). PPIases accelerate the folding of proteins. It catalyzes the cis-trans isomerization of proline imidic peptide bonds in oligopeptides. This Gibberella zeae (strain ATCC MYA-4620 / CBS 123657 / FGSC 9075 / NRRL 31084 / PH-1) (Wheat head blight fungus) protein is Peptidyl-prolyl cis-trans isomerase-like 1 (CYP1).